Here is a 1008-residue protein sequence, read N- to C-terminus: DNA polymerase (1008 aa).

This sequence belongs to the DNA polymerase type-B family. As to quaternary structure, interacts with A20. Component of the Uracil-DNA glycosylase(UDG)-A20-polymerase complex; A20 and UDG form a heterodimeric processivity factor that associates with E9 to form the processive polymerase holoenzyme.

It catalyses the reaction DNA(n) + a 2'-deoxyribonucleoside 5'-triphosphate = DNA(n+1) + diphosphate. Functionally, catalyzes DNA synthesis. Acquires processivity by associating with a heterodimeric processivity factor comprised of the viral A20 and D4 proteins, thereby forming the DNA polymerase holoenzyme. Displays 3'- to 5' exonuclease activity. Might participate in viral DNA recombination. Does not perform translesion synthesis across an abasic site. This Capra hircus (Goat) protein is DNA polymerase (POL).